The sequence spans 460 residues: Ecdysteroid UDP-glucosyltransferase (460 aa).

Residues 1–18 form the signal peptide; the sequence is MFISILLLALAVERILCA.

Belongs to the UDP-glycosyltransferase family.

Functionally, catalyzes the transfer of glucose from UDP-glucose to ecdysteroids which are insect molting hormones. Expression of egt interferes with normal insect development and block molting. The protein is Ecdysteroid UDP-glucosyltransferase (EGT) of Lacanobia oleracea granulosis virus (LoGV).